Here is a 58-residue protein sequence, read N- to C-terminus: Cecropin-A (58 aa).

The N-terminal stretch at 1 to 23 (MNFSKIFIFVVLAVLLLCSQTEA) is a signal peptide. Position 57 is a leucine amide (Leu57).

This sequence belongs to the cecropin family. As to expression, relatively abundant in head, thorax and to a lesser extent in abdominal carcass and anterior midgut.

It localises to the secreted. Its function is as follows. Antibacterial activity against several Gram-positive and Gram-negative bacteria. Antifungal activity against A.fumigatus, B.cinerea, F.culmorum, F.oxysporum, N.crassa, C.albicans, C.neoformans and S.cerevisiae. This Anopheles gambiae (African malaria mosquito) protein is Cecropin-A (CecA).